The following is a 952-amino-acid chain: Serine/threonine-protein kinase atg1 (952 aa).

Positions 23–329 (FTINEQIGKG…FPEYFAHPVV (307 aa)) constitute a Protein kinase domain. ATP contacts are provided by residues 29–37 (IGKGSFATV) and Lys-52. The Proton acceptor role is filled by Asp-166. 4 disordered regions span residues 331-478 (EPIP…EAEQ), 510-573 (GRAN…SSPS), 783-806 (RLPE…GGSS), and 920-952 (AIAK…TPPK). Composition is skewed to basic and acidic residues over residues 338-347 (GDDRPKEKSP) and 356-372 (SLRD…HIDT). Residues 386-398 (SPRTPNIESNQPF) are compositionally biased toward polar residues. Residues 429–439 (PRQRDRKDRTE) are compositionally biased toward basic and acidic residues. Composition is skewed to polar residues over residues 459 to 475 (ANLQ…SITE), 553 to 573 (PDTS…SSPS), and 793 to 806 (NNRS…GGSS). The segment covering 933–952 (SPRRSYSGGTTPTINNTPPK) has biased composition (low complexity).

It belongs to the protein kinase superfamily. Ser/Thr protein kinase family. APG1/unc-51/ULK1 subfamily. In terms of assembly, homodimer. Forms a ternary complex with ATG13 and ATG17.

The protein localises to the cytoplasm. It localises to the preautophagosomal structure membrane. It catalyses the reaction L-seryl-[protein] + ATP = O-phospho-L-seryl-[protein] + ADP + H(+). It carries out the reaction L-threonyl-[protein] + ATP = O-phospho-L-threonyl-[protein] + ADP + H(+). Serine/threonine protein kinase involved in the cytoplasm to vacuole transport (Cvt) and found to be essential in autophagy, where it is required for the formation of autophagosomes. Involved in the clearance of protein aggregates which cannot be efficiently cleared by the proteasome. Required for selective autophagic degradation of the nucleus (nucleophagy) as well as for mitophagy which contributes to regulate mitochondrial quantity and quality by eliminating the mitochondria to a basal level to fulfill cellular energy requirements and preventing excess ROS production. Also involved in endoplasmic reticulum-specific autophagic process, in selective removal of ER-associated degradation (ERAD) substrates. Plays a key role in ATG9 and ATG23 cycling through the pre-autophagosomal structure and is necessary to promote ATG18 binding to ATG9 through phosphorylation of ATG9. Catalyzes phosphorylation of ATG4, decreasing the interaction between ATG4 and ATG8 and impairing deconjugation of PE-conjugated forms of ATG8. This is Serine/threonine-protein kinase atg1 from Botryotinia fuckeliana (strain B05.10) (Noble rot fungus).